Here is a 115-residue protein sequence, read N- to C-terminus: NADH-ubiquinone oxidoreductase chain 3 (115 aa).

3 helical membrane passes run 4 to 24, 55 to 75, and 86 to 106; these read LTAL…AFWL, FFLV…LLPL, and VMML…AYEW.

This sequence belongs to the complex I subunit 3 family. Core subunit of respiratory chain NADH dehydrogenase (Complex I) which is composed of 45 different subunits. Interacts with TMEM186. Interacts with TMEM242.

Its subcellular location is the mitochondrion inner membrane. It carries out the reaction a ubiquinone + NADH + 5 H(+)(in) = a ubiquinol + NAD(+) + 4 H(+)(out). Core subunit of the mitochondrial membrane respiratory chain NADH dehydrogenase (Complex I) which catalyzes electron transfer from NADH through the respiratory chain, using ubiquinone as an electron acceptor. Essential for the catalytic activity of complex I. This Isthmomys pirrensis (Mount Pirri Isthmus rat) protein is NADH-ubiquinone oxidoreductase chain 3.